The chain runs to 217 residues: Mucosal pentraxin (217 aa).

The N-terminal stretch at 1–19 is a signal peptide; the sequence is MEKLLLGVLLLAFLPEGMT. Positions 24-217 constitute a Pentraxin (PTX) domain; that stretch reads RGKVFIFPEQ…KGYVVVKPKL (194 aa). Cys55 and Cys114 are joined by a disulfide. Ca(2+) contacts are provided by Asp77, Asn78, Glu155, Gln156, Asp157, and Gln167.

Belongs to the pentraxin family. In terms of assembly, homopentamer. Pentraxin (or pentaxin) have a discoid arrangement of 5 non-covalently bound subunits. The cofactor is Ca(2+).

The protein localises to the secreted. This Bos taurus (Bovine) protein is Mucosal pentraxin (MPTX).